The following is a 178-amino-acid chain: Crossover junction endodeoxyribonuclease RuvC (178 aa).

Residues D18, E78, and D150 contribute to the active site. Mg(2+)-binding residues include D18, E78, and D150.

It belongs to the RuvC family. Homodimer which binds Holliday junction (HJ) DNA. The HJ becomes 2-fold symmetrical on binding to RuvC with unstacked arms; it has a different conformation from HJ DNA in complex with RuvA. In the full resolvosome a probable DNA-RuvA(4)-RuvB(12)-RuvC(2) complex forms which resolves the HJ. It depends on Mg(2+) as a cofactor.

It localises to the cytoplasm. It catalyses the reaction Endonucleolytic cleavage at a junction such as a reciprocal single-stranded crossover between two homologous DNA duplexes (Holliday junction).. Its function is as follows. The RuvA-RuvB-RuvC complex processes Holliday junction (HJ) DNA during genetic recombination and DNA repair. Endonuclease that resolves HJ intermediates. Cleaves cruciform DNA by making single-stranded nicks across the HJ at symmetrical positions within the homologous arms, yielding a 5'-phosphate and a 3'-hydroxyl group; requires a central core of homology in the junction. The consensus cleavage sequence is 5'-(A/T)TT(C/G)-3'. Cleavage occurs on the 3'-side of the TT dinucleotide at the point of strand exchange. HJ branch migration catalyzed by RuvA-RuvB allows RuvC to scan DNA until it finds its consensus sequence, where it cleaves and resolves the cruciform DNA. The polypeptide is Crossover junction endodeoxyribonuclease RuvC (Granulibacter bethesdensis (strain ATCC BAA-1260 / CGDNIH1)).